The chain runs to 90 residues: Small ribosomal subunit protein bS20 (90 aa).

Residues 1 to 11 (MANIKSSEKDI) show a composition bias toward basic and acidic residues. Disordered stretches follow at residues 1–29 (MANI…SRLR) and 69–90 (SKNA…SAAA).

Belongs to the bacterial ribosomal protein bS20 family.

Its function is as follows. Binds directly to 16S ribosomal RNA. The sequence is that of Small ribosomal subunit protein bS20 from Leptospira borgpetersenii serovar Hardjo-bovis (strain L550).